A 447-amino-acid polypeptide reads, in one-letter code: Tubulin alpha-1 chain (447 aa).

GTP-binding residues include Gln-11, Glu-72, Ser-141, Gly-145, Thr-146, Thr-180, Asn-207, and Asn-229. Glu-72 lines the Mg(2+) pocket. Glu-255 is an active-site residue.

The protein belongs to the tubulin family. In terms of assembly, dimer of alpha and beta chains. A typical microtubule is a hollow water-filled tube with an outer diameter of 25 nm and an inner diameter of 15 nM. Alpha-beta heterodimers associate head-to-tail to form protofilaments running lengthwise along the microtubule wall with the beta-tubulin subunit facing the microtubule plus end conferring a structural polarity. Microtubules usually have 13 protofilaments but different protofilament numbers can be found in some organisms and specialized cells. It depends on Mg(2+) as a cofactor.

The protein localises to the cytoplasm. It localises to the cytoskeleton. It catalyses the reaction GTP + H2O = GDP + phosphate + H(+). Functionally, tubulin is the major constituent of microtubules, a cylinder consisting of laterally associated linear protofilaments composed of alpha- and beta-tubulin heterodimers. Microtubules grow by the addition of GTP-tubulin dimers to the microtubule end, where a stabilizing cap forms. Below the cap, tubulin dimers are in GDP-bound state, owing to GTPase activity of alpha-tubulin. This is Tubulin alpha-1 chain (TUB1) from Saccharomyces cerevisiae (strain ATCC 204508 / S288c) (Baker's yeast).